A 501-amino-acid chain; its full sequence is Rhazimal synthase (501 aa).

Residues Met4–Val24 form a helical membrane-spanning segment. N-linked (GlcNAc...) asparagine glycosylation is present at Asn282. A heme-binding site is contributed by Cys442.

Belongs to the cytochrome P450 family. Heme is required as a cofactor.

The protein localises to the membrane. The enzyme catalyses (19E)-geissoschizine + reduced [NADPH--hemoprotein reductase] + O2 = rhazimal + oxidized [NADPH--hemoprotein reductase] + 2 H2O + H(+). It carries out the reaction (19E)-geissoschizine + reduced [NADPH--hemoprotein reductase] + O2 = akuammicine + formate + oxidized [NADPH--hemoprotein reductase] + H2O + H(+). It functions in the pathway alkaloid biosynthesis. In terms of biological role, a cytochrome P450 monooxygenase involved in the biosynthesis of akuammilan monoterpene indole alkaloids (MIAs) natural products, components with various biological properties such as antidiabetic, antibacterial, anti-inflammatory, anticancer, and antimalarial activities. Catalyzes the conversion of geissoschizine to rhazimal. Can also, with lower efficiency, support the conversion of geissoschizine to akuammicine. The protein is Rhazimal synthase of Alstonia scholaris (Dogbane).